We begin with the raw amino-acid sequence, 1055 residues long: Sodium/potassium exporting P-type ATPase 1 (1055 aa).

The Cytoplasmic portion of the chain corresponds to 1–73; sequence MTPSIGYVDE…GADEKISISK (73 aa). The chain crosses the membrane as a helical span at residues 74-94; sequence ILAHQIFNAMVLVLIISLIIA. At 95-99 the chain is on the extracellular side; it reads LAIKD. A helical membrane pass occupies residues 100-120; that stretch reads WISGGVIGFVVFINIFVGFIQ. Over 121–298 the chain is Cytoplasmic; the sequence is ELKAEKTMGS…TNVGTPLQRK (178 aa). A helical membrane pass occupies residues 299 to 319; the sequence is LSWLAILLFWVAVLFAIVVMA. The Extracellular segment spans residues 320–328; that stretch reads SQEMRVNRN. The helical transmembrane segment at 329–349 threads the bilayer; it reads VAIYAICVALSMIPSSLVVVL. Topologically, residues 350–789 are cytoplasmic; sequence TITMAIGAQV…RMSSNIQKFV (440 aa). Residue aspartate 385 is the 4-aspartylphosphate intermediate of the active site. 2 residues coordinate Mg(2+): aspartate 385 and threonine 387. Residues threonine 387, glutamate 491, lysine 544, arginine 586, threonine 646, glycine 647, aspartate 648, arginine 705, and lysine 711 each contribute to the ATP site. Aspartate 730 contributes to the Mg(2+) binding site. Position 733 (asparagine 733) interacts with ATP. Residues 790–810 traverse the membrane as a helical segment; it reads LQLLAENVAQALYLMIGLAFI. Residues 811–816 are Extracellular-facing; sequence DKSGYS. The chain crosses the membrane as a helical span at residues 817-837; it reads VFPLSPVEVLWIIVVTSCFPA. Topologically, residues 838 to 866 are cytoplasmic; sequence MGLGQEKASHDILEQPPNATIFTWEVIID. A helical transmembrane segment spans residues 867–887; the sequence is MIAYGFWMAVCCLVCFVCIVY. At 888-913 the chain is on the extracellular side; it reads GKGDGSLGENCNEGSDTGCNLVFRGR. The chain crosses the membrane as a helical span at residues 914–934; that stretch reads SGAFAAFTWCALLLAWECIHL. At 935–962 the chain is on the cytoplasmic side; the sequence is RLSFFKMRPELENPWWKQLAIDLWDNQF. The chain crosses the membrane as a helical span at residues 963–983; it reads LFWSVMGAIVSVFPVVYIPVI. Over 984–990 the chain is Extracellular; it reads NNKVFLH. The helical transmembrane segment at 991–1011 threads the bilayer; sequence APIGYEWGLAVAFTILFLIGA. Topologically, residues 1012 to 1055 are cytoplasmic; that stretch reads EGWKWFKRVYYRKSNANNPEYDLERNDPFKEYSSFSKSNTMEIV.

The protein belongs to the cation transport ATPase (P-type) (TC 3.A.3) family. Type IID subfamily. It depends on Mg(2+) as a cofactor. The active site is phosphorylated in presence of sodium or potassium and in conditions of higher pH. Not phosphorylated in presence of calcium ions.

The protein resides in the cell membrane. It carries out the reaction Na(+)(in) + ATP + H2O = Na(+)(out) + ADP + phosphate + H(+). The enzyme catalyses K(+)(in) + ATP + H2O = K(+)(out) + ADP + phosphate + H(+). Catalyzes the hydrolysis of ATP coupled with the export of sodium and potassium from the cell. May be an inefficient potassium exporter. May transport other cations such as lithium. Sodium/potassium efflux ATPases are involved in salt tolerance and maintaining the membrane potential across the plasma membrane in high salinity (Na+) or alkaline (K+) environments. The chain is Sodium/potassium exporting P-type ATPase 1 from Schwanniomyces occidentalis (Yeast).